Here is a 388-residue protein sequence, read N- to C-terminus: Probable peptidoglycan glycosyltransferase FtsW (388 aa).

The Cytoplasmic segment spans residues 1 to 19; it reads MSAAAPKPRPAHRFHIDQT. A helical transmembrane segment spans residues 20–40; that stretch reads LLSVCLCLLGIGFVMVASSSM. At 41-57 the chain is on the periplasmic side; that stretch reads HLGVKMADDVSYYPFKQ. Residues 58 to 78 form a helical membrane-spanning segment; the sequence is LVHIILGLMFAAAILAIPMKY. At 79–85 the chain is on the cytoplasmic side; that stretch reads WQKIGQP. The helical transmembrane segment at 86 to 106 threads the bilayer; that stretch reads LFIVGLVLLLVVLIPGVGVKV. The Periplasmic portion of the chain corresponds to 107–117; it reads NGSTRWLSLLG. The chain crosses the membrane as a helical span at residues 118 to 137; the sequence is LRIQVSEVMKFISVVYMAGY. The Cytoplasmic portion of the chain corresponds to 138 to 147; it reads ITRHSDHVRH. Residues 148–168 form a helical membrane-spanning segment; the sequence is SIFGLLRPLMLLSVASILLLL. Residues 169-170 lie on the Periplasmic side of the membrane; it reads EP. Residues 171 to 191 form a helical membrane-spanning segment; it reads DFGSAVVILIIAMGMMFLGGA. Residue arginine 192 is a topological domain, cytoplasmic. The helical transmembrane segment at 193–213 threads the bilayer; the sequence is LSPFVALVALISSAGAILASS. Residues 214-271 are Periplasmic-facing; sequence ADYRVKRMTSFLNPWEHARDSGYQLTQALISFGRGEVSGVGLGNGLQKLFYLPEAHTD. Residues 272–292 form a helical membrane-spanning segment; it reads FLFSVLGEELGLVGVTLVIAL. Residues 293–315 are Cytoplasmic-facing; it reads FTTLVVRGFSIGEQAEAAGERFS. A helical transmembrane segment spans residues 316–336; it reads ALVAYGLVIWFGFQAFVNMGV. The Periplasmic segment spans residues 337-348; sequence NMGILPTKGLTL. The helical transmembrane segment at 349–369 threads the bilayer; sequence PLMSYGGGSMIVMCGAMAVLF. Residues 370 to 388 lie on the Cytoplasmic side of the membrane; sequence RIHYEVTELHKSNIKGKSR.

Belongs to the SEDS family. FtsW subfamily.

Its subcellular location is the cell inner membrane. The catalysed reaction is [GlcNAc-(1-&gt;4)-Mur2Ac(oyl-L-Ala-gamma-D-Glu-L-Lys-D-Ala-D-Ala)](n)-di-trans,octa-cis-undecaprenyl diphosphate + beta-D-GlcNAc-(1-&gt;4)-Mur2Ac(oyl-L-Ala-gamma-D-Glu-L-Lys-D-Ala-D-Ala)-di-trans,octa-cis-undecaprenyl diphosphate = [GlcNAc-(1-&gt;4)-Mur2Ac(oyl-L-Ala-gamma-D-Glu-L-Lys-D-Ala-D-Ala)](n+1)-di-trans,octa-cis-undecaprenyl diphosphate + di-trans,octa-cis-undecaprenyl diphosphate + H(+). Its pathway is cell wall biogenesis; peptidoglycan biosynthesis. In terms of biological role, peptidoglycan polymerase that is essential for cell division. This chain is Probable peptidoglycan glycosyltransferase FtsW, found in Methylomonas methanica (strain DSM 25384 / MC09).